Consider the following 431-residue polypeptide: MFVDQVKISLKAGDGGNGITAYRREKYVPFGGPAGGDGGDGASIIFEVDEGLRTLLDFRYQTHFKAKRGDGGQSSNMHGKNAEHLVLKVPPGTIIKSADSEEVLADLVENGQRAVVAKGGRGGRGNSRFASPRNPAPDFSENGEPGEEIEVTLELKLLADVGLVGFPSVGKSTLLSIVSKAKPKIGAYHFTTIKPNLGVVSTKDQRSFVMADLPGLIEGASEGIGLGHQFLKHVERTKVIVHMIDMSGSEGRDPYEDYKVINEELSAYEHRLEERPQIVVANKMDMPNAEDNLALFKEEINDDSVHIIPLSTFKHDHIDELLYAIADKLEAVKDIDFSKDEEEDLGVNRVVYKHTPSQDKFTITRDDDAAYVVSGKAIERMFKMTDFNSDPAVRRFARQMRSMGIDDALRARGCRNGDIVRILGGEFEFVE.

Positions 1 to 158 constitute an Obg domain; the sequence is MFVDQVKISL…IEVTLELKLL (158 aa). The tract at residues 118 to 144 is disordered; the sequence is KGGRGGRGNSRFASPRNPAPDFSENGE. One can recognise an OBG-type G domain in the interval 159–330; the sequence is ADVGLVGFPS…LLYAIADKLE (172 aa). Residues 165–172, 190–194, 212–215, 282–285, and 311–313 contribute to the GTP site; these read GFPSVGKS, FTTIK, DLPG, NKMD, and STF. Residues serine 172 and threonine 192 each contribute to the Mg(2+) site. The OCT domain occupies 353–431; sequence KHTPSQDKFT…ILGGEFEFVE (79 aa).

This sequence belongs to the TRAFAC class OBG-HflX-like GTPase superfamily. OBG GTPase family. As to quaternary structure, monomer. Mg(2+) serves as cofactor.

The protein localises to the cytoplasm. Functionally, an essential GTPase which binds GTP, GDP and possibly (p)ppGpp with moderate affinity, with high nucleotide exchange rates and a fairly low GTP hydrolysis rate. Plays a role in control of the cell cycle, stress response, ribosome biogenesis and in those bacteria that undergo differentiation, in morphogenesis control. In Staphylococcus saprophyticus subsp. saprophyticus (strain ATCC 15305 / DSM 20229 / NCIMB 8711 / NCTC 7292 / S-41), this protein is GTPase Obg.